Here is a 438-residue protein sequence, read N- to C-terminus: Aspartate--tRNA(Asp/Asn) ligase (438 aa).

Glu176 is a binding site for L-aspartate. The interval 198–201 (QLYK) is aspartate. Arg220 serves as a coordination point for L-aspartate. Residues 220–222 (RAE), 228–230 (RHL), and Glu361 each bind ATP. Mg(2+) is bound by residues Glu361 and Ser364. Residues Ser364 and Arg368 each coordinate L-aspartate. Residue 409-412 (GADR) participates in ATP binding.

This sequence belongs to the class-II aminoacyl-tRNA synthetase family. Type 2 subfamily. As to quaternary structure, homodimer. The cofactor is Mg(2+).

It localises to the cytoplasm. It catalyses the reaction tRNA(Asx) + L-aspartate + ATP = L-aspartyl-tRNA(Asx) + AMP + diphosphate. Functionally, aspartyl-tRNA synthetase with relaxed tRNA specificity since it is able to aspartylate not only its cognate tRNA(Asp) but also tRNA(Asn). Reaction proceeds in two steps: L-aspartate is first activated by ATP to form Asp-AMP and then transferred to the acceptor end of tRNA(Asp/Asn). In Methanococcus maripaludis (strain C6 / ATCC BAA-1332), this protein is Aspartate--tRNA(Asp/Asn) ligase.